The sequence spans 317 residues: Malate dehydrogenase (317 aa).

NAD(+) contacts are provided by residues 10 to 15 (GGGQIG) and Asp-34. Residues Arg-83 and Arg-89 each contribute to the substrate site. NAD(+) contacts are provided by residues Asn-96 and 119-121 (ISN). The substrate site is built by Asn-121 and Arg-152. Catalysis depends on His-176, which acts as the Proton acceptor.

Belongs to the LDH/MDH superfamily. MDH type 3 family.

It carries out the reaction (S)-malate + NAD(+) = oxaloacetate + NADH + H(+). Functionally, catalyzes the reversible oxidation of malate to oxaloacetate. The sequence is that of Malate dehydrogenase from Citrifermentans bemidjiense (strain ATCC BAA-1014 / DSM 16622 / JCM 12645 / Bem) (Geobacter bemidjiensis).